A 122-amino-acid polypeptide reads, in one-letter code: Small ribosomal subunit protein bS6 (122 aa).

It belongs to the bacterial ribosomal protein bS6 family.

Functionally, binds together with bS18 to 16S ribosomal RNA. In Neisseria gonorrhoeae (strain ATCC 700825 / FA 1090), this protein is Small ribosomal subunit protein bS6.